The primary structure comprises 305 residues: Nucleotide-binding protein Mjls_2437 (305 aa).

28–35 (GLSGAGRG) contacts ATP. 79-82 (DVRS) provides a ligand contact to GTP.

This sequence belongs to the RapZ-like family.

Its function is as follows. Displays ATPase and GTPase activities. This Mycobacterium sp. (strain JLS) protein is Nucleotide-binding protein Mjls_2437.